Consider the following 392-residue polypeptide: Cytochrome P450 monooxygenase ppzE (392 aa).

The helical transmembrane segment at 10 to 30 (LELVWFVALYPFACWTLFAVL) threads the bilayer. N319 carries an N-linked (GlcNAc...) asparagine glycan. A heme-binding site is contributed by C353. The N-linked (GlcNAc...) asparagine glycan is linked to N372.

The protein belongs to the cytochrome P450 family. It depends on heme as a cofactor.

It localises to the membrane. It participates in secondary metabolite biosynthesis. In terms of biological role, cytochrome P450 monooxygenase; part of the gene cluster that mediates the biosynthesis of pyrrolopyrazines, secondary metabolites showing insecticidal activity. The role of ppzE within the pathway has still to be determined. The single multifunctional NRPS ppzA is sufficient to produce peramine via condensation of 1-pyrroline-5-carboxylate and arginine, N-methylation of the alpha-amino group of arginine and reduction of the thioester and the cyclization to form an iminium ion resulting in release from the peptide synthetase. Deprotonation of this intermediate and oxidation of the pyrroline ring would give rise to peramine. In Epichloe species that produce only peramine, the peramine synthetase gene is not localized in a gene cluster, in contrast to Metarhizium species that contain additional pyrrolopyrazine biosynthesis genes. The 2-oxoglutarate-Fe(II) type oxidoreductase ppzC hydroxylates peramine to yield the newly identified compound 8-hydroxyperamine whereas ppzD converts L-proline into trans-4-hydroxy-L-proline, a precursor of peramine biosynthesis. In Metarhizium rileyi (strain RCEF 4871) (Nomuraea rileyi), this protein is Cytochrome P450 monooxygenase ppzE.